We begin with the raw amino-acid sequence, 169 residues long: Der GTPase-activating protein YihI (169 aa).

Disordered regions lie at residues 1 to 92 (MKPS…EKPM) and 146 to 169 (SYDDDEEEEEDEKQEDMMRLLRGN). The segment covering 10-19 (SKGHAKARRK) has biased composition (basic residues). The segment covering 20–30 (TREELDQEARD) has biased composition (basic and acidic residues). Positions 31-40 (RKRQKKRRGH) are enriched in basic residues. Over residues 49–58 (GNTTSGSKGQ) the composition is skewed to polar residues. The segment covering 147–159 (YDDDEEEEEDEKQ) has biased composition (acidic residues). Basic and acidic residues predominate over residues 160–169 (EDMMRLLRGN).

This sequence belongs to the YihI family. As to quaternary structure, interacts with Der.

A GTPase-activating protein (GAP) that modifies Der/EngA GTPase function. May play a role in ribosome biogenesis. The polypeptide is Der GTPase-activating protein YihI (Escherichia coli O1:K1 / APEC).